The primary structure comprises 251 residues: Hydroxyacylglutathione hydrolase (251 aa).

Positions 55, 57, 59, 60, 112, 131, and 169 each coordinate Zn(2+).

It belongs to the metallo-beta-lactamase superfamily. Glyoxalase II family. Monomer. Zn(2+) serves as cofactor.

It catalyses the reaction an S-(2-hydroxyacyl)glutathione + H2O = a 2-hydroxy carboxylate + glutathione + H(+). The protein operates within secondary metabolite metabolism; methylglyoxal degradation; (R)-lactate from methylglyoxal: step 2/2. Its function is as follows. Thiolesterase that catalyzes the hydrolysis of S-D-lactoyl-glutathione to form glutathione and D-lactic acid. The protein is Hydroxyacylglutathione hydrolase of Erythrobacter litoralis (strain HTCC2594).